The sequence spans 164 residues: Ribosome maturation factor RimP (164 aa).

It belongs to the RimP family.

It localises to the cytoplasm. Required for maturation of 30S ribosomal subunits. This is Ribosome maturation factor RimP from Mesoplasma florum (strain ATCC 33453 / NBRC 100688 / NCTC 11704 / L1) (Acholeplasma florum).